The following is an 821-amino-acid chain: Serine/threonine-protein kinase RAD53 (821 aa).

Ser-24 is modified (phosphoserine). The FHA 1 domain occupies Trp-66–Val-116. Ser-175 is subject to Phosphoserine. One can recognise a Protein kinase domain in the interval Ser-198–Ile-466. ATP-binding positions include Val-204–Val-212 and Lys-227. Asp-319 serves as the catalytic Proton acceptor. Ser-547 and Ser-560 each carry phosphoserine. Residues Phe-601–Met-664 enclose the FHA 2 domain. Residues Ala-735 to Asp-770 are disordered. Residues Pro-742–Asp-770 are compositionally biased toward low complexity. Residues Ser-774 and Ser-793 each carry the phosphoserine modification. Residues Ser-791–Ser-821 are disordered. Positions Asp-809 to Ser-821 are enriched in polar residues.

It belongs to the protein kinase superfamily. CAMK Ser/Thr protein kinase family. CHEK2 subfamily. Interacts (via domain FHA 1) with PTC2 (when phosphorylated); the interaction is direct and serves to regulate DNA damage checkpoint signaling. Interacts with PIN4. Autophosphorylated. Phosphorylated in response to DNA double-strand breaks; dephosphorylation is mediated by PTC2 and PTC3.

Its subcellular location is the nucleus. The enzyme catalyses L-seryl-[protein] + ATP = O-phospho-L-seryl-[protein] + ADP + H(+). It carries out the reaction L-threonyl-[protein] + ATP = O-phospho-L-threonyl-[protein] + ADP + H(+). The catalysed reaction is L-tyrosyl-[protein] + ATP = O-phospho-L-tyrosyl-[protein] + ADP + H(+). Its activity is regulated as follows. Inactivated by dephosphorylation via recruitment of PTC2. In terms of biological role, controls S-phase checkpoint as well as G1 and G2 DNA damage checkpoints. Phosphorylates proteins on serine, threonine, and tyrosine. Prevents entry into anaphase and mitotic exit after DNA damage via regulation of the Polo kinase CDC5. Seems to be involved in the phosphorylation of RPH1. The protein is Serine/threonine-protein kinase RAD53 (RAD53) of Saccharomyces cerevisiae (strain ATCC 204508 / S288c) (Baker's yeast).